The chain runs to 149 residues: Large ribosomal subunit protein bL9 (149 aa).

Belongs to the bacterial ribosomal protein bL9 family.

Binds to the 23S rRNA. The sequence is that of Large ribosomal subunit protein bL9 from Endomicrobium trichonymphae.